Here is a 263-residue protein sequence, read N- to C-terminus: 3-methyl-2-oxobutanoate hydroxymethyltransferase (263 aa).

Mg(2+) is bound by residues Asp44 and Asp83. 3-methyl-2-oxobutanoate-binding positions include 44–45 (DS), Asp83, and Lys112. Glu114 contributes to the Mg(2+) binding site. Glu181 serves as the catalytic Proton acceptor.

Belongs to the PanB family. Homodecamer; pentamer of dimers. The cofactor is Mg(2+).

It localises to the cytoplasm. The catalysed reaction is 3-methyl-2-oxobutanoate + (6R)-5,10-methylene-5,6,7,8-tetrahydrofolate + H2O = 2-dehydropantoate + (6S)-5,6,7,8-tetrahydrofolate. It participates in cofactor biosynthesis; (R)-pantothenate biosynthesis; (R)-pantoate from 3-methyl-2-oxobutanoate: step 1/2. Its function is as follows. Catalyzes the reversible reaction in which hydroxymethyl group from 5,10-methylenetetrahydrofolate is transferred onto alpha-ketoisovalerate to form ketopantoate. The protein is 3-methyl-2-oxobutanoate hydroxymethyltransferase of Nitrosospira multiformis (strain ATCC 25196 / NCIMB 11849 / C 71).